We begin with the raw amino-acid sequence, 145 residues long: Basic phospholipase A2 GL1-1 (145 aa).

Residues 1-21 (MYPAHLLVLLAVCVSLLGASA) form the signal peptide. Positions 22–27 (IPPLPL) are excised as a propeptide. 7 cysteine pairs are disulfide-bonded: Cys-38–Cys-98, Cys-54–Cys-144, Cys-56–Cys-72, Cys-71–Cys-125, Cys-78–Cys-118, Cys-87–Cys-111, and Cys-105–Cys-116. Ca(2+)-binding residues include Tyr-55, Gly-57, and Gly-59. Residue His-75 is part of the active site. Asp-76 is a Ca(2+) binding site. Asp-119 is an active-site residue.

This sequence belongs to the phospholipase A2 family. Group I subfamily. D49 sub-subfamily. Requires Ca(2+) as cofactor. Expressed by the venom gland.

Its subcellular location is the secreted. It carries out the reaction a 1,2-diacyl-sn-glycero-3-phosphocholine + H2O = a 1-acyl-sn-glycero-3-phosphocholine + a fatty acid + H(+). PLA2 catalyzes the calcium-dependent hydrolysis of the 2-acyl groups in 3-sn-phosphoglycerides. The sequence is that of Basic phospholipase A2 GL1-1 from Laticauda semifasciata (Black-banded sea krait).